A 572-amino-acid chain; its full sequence is MANAPHGGVLKDLLARDAPRQAELAAEAESLPAVTLTERQLCDLELIMNGGFSPLEGFMNQADYDRVCEDNRLADGNVFSMPITLDASQEVIDEKKLQAASRITLRDFRDDRNLAILTIDDIYRPDKTKEAKLVFGGDPEHPAIVYLNNTVKEFYIGGKIEAVNKLNHYDYVALRYTPAELRVHFDKLGWSRVVAFQTRNPMHRAHRELTVRAARSRQANVLIHPVVGLTKPGDIDHFTRVRAYQALLPRYPNGMAVLGLLGLAMRMGGPREAIWHAIIRKNHGATHFIVGRDHAGPGSNSKGEDFYGPYDAQHAVEKYKDELGIEVVEFQMVTYLPDTDEYRPVDQVPAGVKTLNISGTELRRRLRSAHIPEWFSYPEVVKILRESNPPRATQGFTIFLTGYMNSGKDAIARALQVTLNQQGGRSVSLLLGDTVRHELSSELGFTREDRHTNIQRIAFVATELTRAGAAVIAAPIAPYEESRKFARDAVSQAGSFFLVHVATPLEHCEQSDKRGIYAAARRGEIKGFTGVDDPYETPEKADLVVDFSKQSVRSIVHEIILVLESQGFLERQ.

The segment at 1–169 (MANAPHGGVL…IEAVNKLNHY (169 aa)) is N-terminal. Positions 170–393 (DYVALRYTPA…LRESNPPRAT (224 aa)) are catalytic. Glutamine 197 is a binding site for sulfate. ATP-binding positions include 197-200 (QTRN) and 291-294 (GRDH). Catalysis depends on residues threonine 198, arginine 199, and asparagine 200. Arginine 199 contacts sulfate. Residue alanine 295 coordinates sulfate. Valine 333 contacts ATP. Residues 394–572 (QGFTIFLTGY…LESQGFLERQ (179 aa)) are allosteric regulation domain; adenylyl-sulfate kinase-like. 3'-phosphoadenylyl sulfate contacts are provided by residues 433 to 436 (DTVR), arginine 450, 476 to 477 (IA), and arginine 514.

In the N-terminal section; belongs to the sulfate adenylyltransferase family. It in the C-terminal section; belongs to the APS kinase family. Homohexamer. Dimer of trimers.

Its subcellular location is the cytoplasm. The catalysed reaction is sulfate + ATP + H(+) = adenosine 5'-phosphosulfate + diphosphate. It participates in sulfur metabolism; hydrogen sulfide biosynthesis; sulfite from sulfate: step 1/3. With respect to regulation, allosterically inhibited by 3'-phosphoadenosine 5'-phosphosulfate (PAPS). In terms of biological role, catalyzes the first intracellular reaction of sulfate assimilation, forming adenosine-5'-phosphosulfate (APS) from inorganic sulfate and ATP. Plays an important role in sulfate activation as a component of the biosynthesis pathway of sulfur-containing amino acids. The chain is Sulfate adenylyltransferase from Penicillium chrysogenum (Penicillium notatum).